Here is a 176-residue protein sequence, read N- to C-terminus: Inorganic pyrophosphatase (176 aa).

Substrate contacts are provided by K30, R44, and Y56. D66, D71, and D103 together coordinate Mg(2+). Substrate is bound at residue Y142.

Belongs to the PPase family. Homohexamer. It depends on Mg(2+) as a cofactor.

It localises to the cytoplasm. The catalysed reaction is diphosphate + H2O = 2 phosphate + H(+). Catalyzes the hydrolysis of inorganic pyrophosphate (PPi) forming two phosphate ions. In Salmonella typhi, this protein is Inorganic pyrophosphatase.